We begin with the raw amino-acid sequence, 471 residues long: Glutamate--tRNA ligase (471 aa).

A 'HIGH' region motif is present at residues 9 to 19 (PSPTGYLHVGG). Cysteine 98, cysteine 100, cysteine 125, and histidine 127 together coordinate Zn(2+). The 'KMSKS' region motif lies at 237-241 (KLSKR). Lysine 240 is a binding site for ATP.

It belongs to the class-I aminoacyl-tRNA synthetase family. Glutamate--tRNA ligase type 1 subfamily. As to quaternary structure, monomer. The cofactor is Zn(2+).

The protein localises to the cytoplasm. The catalysed reaction is tRNA(Glu) + L-glutamate + ATP = L-glutamyl-tRNA(Glu) + AMP + diphosphate. Functionally, catalyzes the attachment of glutamate to tRNA(Glu) in a two-step reaction: glutamate is first activated by ATP to form Glu-AMP and then transferred to the acceptor end of tRNA(Glu). The sequence is that of Glutamate--tRNA ligase from Cronobacter sakazakii (strain ATCC BAA-894) (Enterobacter sakazakii).